The sequence spans 56 residues: Large ribosomal subunit protein eL40 (56 aa).

It belongs to the eukaryotic ribosomal protein eL40 family.

The polypeptide is Large ribosomal subunit protein eL40 (Sulfurisphaera tokodaii (strain DSM 16993 / JCM 10545 / NBRC 100140 / 7) (Sulfolobus tokodaii)).